The chain runs to 197 residues: Ribonuclease HII (197 aa).

Residues 9-197 (ELIAGVDEVG…APVKKALEQF (189 aa)) enclose the RNase H type-2 domain. Positions 15, 16, and 107 each coordinate a divalent metal cation.

This sequence belongs to the RNase HII family. The cofactor is Mn(2+). Mg(2+) is required as a cofactor.

The protein resides in the cytoplasm. The catalysed reaction is Endonucleolytic cleavage to 5'-phosphomonoester.. Endonuclease that specifically degrades the RNA of RNA-DNA hybrids. This is Ribonuclease HII from Haemophilus influenzae (strain PittGG).